The sequence spans 220 residues: Large ribosomal subunit protein uL3 (220 aa).

The protein belongs to the universal ribosomal protein uL3 family. In terms of assembly, part of the 50S ribosomal subunit. Forms a cluster with proteins L14 and L19.

Functionally, one of the primary rRNA binding proteins, it binds directly near the 3'-end of the 23S rRNA, where it nucleates assembly of the 50S subunit. The chain is Large ribosomal subunit protein uL3 from Staphylococcus carnosus (strain TM300).